The primary structure comprises 110 residues: Chagasin (110 aa).

The short motif at 29 to 34 (NPTTGF) is the BC loop element. A DE loop motif is present at residues 59–68 (PPDSKLLGAG). Positions 91 to 100 (RPWTGPSHDS) match the FG loop motif.

The protein belongs to the protease inhibitor I42 family. As to quaternary structure, interacts with cruzipain.

It localises to the flagellar pocket. The protein localises to the cytoplasmic vesicle. Its subcellular location is the cell surface. Its function is as follows. Cysteine protease inhibitor. Inhibits cysteine protease cruzipain. The chain is Chagasin (cha) from Trypanosoma cruzi.